We begin with the raw amino-acid sequence, 810 residues long: Transducer protein CosT (810 aa).

The Cytoplasmic portion of the chain corresponds to Met1–Lys38. A helical membrane pass occupies residues Phe39–Ala59. At Asp60–Thr323 the chain is on the extracellular side. Residues Gly324–Gly344 form a helical membrane-spanning segment. In terms of domain architecture, HAMP 1 spans Arg345–Asp397. At Arg345–Asp810 the chain is on the cytoplasmic side. Residues Arg403–Ala427 form a disordered region. The segment covering Glu414–Ala427 has biased composition (basic and acidic residues). The region spanning Ala439–Ile493 is the HAMP 2 domain. Residues Gly512–Ala748 form the Methyl-accepting transducer domain. A glutamate methyl ester (Glu) mark is found at Glu556 and Glu739. The disordered stretch occupies residues Ser751–Gly784. The span at Ala755–Glu774 shows a compositional bias: low complexity. Residues Ile775–Gly784 are compositionally biased toward polar residues.

It belongs to the methyl-accepting chemotaxis (MCP) protein family. Methylated by CheR.

Its subcellular location is the cell membrane. Its function is as follows. Mediates chemotaxis towards compatible osmolytes. Probably transduces the signal from the substrate-binding protein CosB to the histidine kinase CheA. The sequence is that of Transducer protein CosT (cosT) from Halobacterium salinarum (strain ATCC 700922 / JCM 11081 / NRC-1) (Halobacterium halobium).